Reading from the N-terminus, the 354-residue chain is 3-dehydroquinate synthase (354 aa).

Residues 100–104 (GATGD), 124–125 (TT), Lys-136, Lys-145, and 163–166 (FLKT) contribute to the NAD(+) site. 3 residues coordinate Zn(2+): Glu-178, His-242, and His-256.

Belongs to the sugar phosphate cyclases superfamily. Dehydroquinate synthase family. Requires NAD(+) as cofactor. It depends on Co(2+) as a cofactor. The cofactor is Zn(2+).

The protein resides in the cytoplasm. It carries out the reaction 7-phospho-2-dehydro-3-deoxy-D-arabino-heptonate = 3-dehydroquinate + phosphate. Its pathway is metabolic intermediate biosynthesis; chorismate biosynthesis; chorismate from D-erythrose 4-phosphate and phosphoenolpyruvate: step 2/7. In terms of biological role, catalyzes the conversion of 3-deoxy-D-arabino-heptulosonate 7-phosphate (DAHP) to dehydroquinate (DHQ). This is 3-dehydroquinate synthase from Staphylococcus aureus (strain MSSA476).